Consider the following 90-residue polypeptide: Small ribosomal subunit protein uS17 (90 aa).

This sequence belongs to the universal ribosomal protein uS17 family. As to quaternary structure, part of the 30S ribosomal subunit.

One of the primary rRNA binding proteins, it binds specifically to the 5'-end of 16S ribosomal RNA. In Paraburkholderia phymatum (strain DSM 17167 / CIP 108236 / LMG 21445 / STM815) (Burkholderia phymatum), this protein is Small ribosomal subunit protein uS17.